The sequence spans 225 residues: 7-cyano-7-deazaguanine synthase (225 aa).

ATP is bound at residue 9–19 (YSGGLDSTTCL). Zn(2+)-binding residues include Cys188, Cys198, Cys201, and Cys204.

This sequence belongs to the QueC family. Requires Zn(2+) as cofactor.

It carries out the reaction 7-carboxy-7-deazaguanine + NH4(+) + ATP = 7-cyano-7-deazaguanine + ADP + phosphate + H2O + H(+). The protein operates within purine metabolism; 7-cyano-7-deazaguanine biosynthesis. Functionally, catalyzes the ATP-dependent conversion of 7-carboxy-7-deazaguanine (CDG) to 7-cyano-7-deazaguanine (preQ(0)). This Geobacter sp. (strain M21) protein is 7-cyano-7-deazaguanine synthase.